Consider the following 394-residue polypeptide: Elongation factor Tu 1 (394 aa).

Residues 10-204 (KPHVNVGTIG…ALDSYIPEPE (195 aa)) form the tr-type G domain. The interval 19-26 (GHVDHGKT) is G1. 19 to 26 (GHVDHGKT) lines the GTP pocket. Mg(2+) is bound at residue Thr26. The tract at residues 60–64 (GITIS) is G2. The G3 stretch occupies residues 81-84 (DCPG). GTP is bound by residues 81 to 85 (DCPGH) and 136 to 139 (NKCD). The segment at 136-139 (NKCD) is G4. The interval 174-176 (SAL) is G5.

Belongs to the TRAFAC class translation factor GTPase superfamily. Classic translation factor GTPase family. EF-Tu/EF-1A subfamily. Monomer.

It localises to the cytoplasm. It catalyses the reaction GTP + H2O = GDP + phosphate + H(+). In terms of biological role, GTP hydrolase that promotes the GTP-dependent binding of aminoacyl-tRNA to the A-site of ribosomes during protein biosynthesis. The sequence is that of Elongation factor Tu 1 from Vibrio vulnificus (strain YJ016).